Consider the following 295-residue polypeptide: Pyridoxal 5'-phosphate synthase subunit PdxS (295 aa).

A D-ribose 5-phosphate-binding site is contributed by Asp25. Lys82 acts as the Schiff-base intermediate with D-ribose 5-phosphate in catalysis. Gly154 is a binding site for D-ribose 5-phosphate. Arg166 serves as a coordination point for D-glyceraldehyde 3-phosphate. D-ribose 5-phosphate-binding positions include Gly215 and 236 to 237 (GS).

This sequence belongs to the PdxS/SNZ family. As to quaternary structure, in the presence of PdxT, forms a dodecamer of heterodimers.

The enzyme catalyses aldehydo-D-ribose 5-phosphate + D-glyceraldehyde 3-phosphate + L-glutamine = pyridoxal 5'-phosphate + L-glutamate + phosphate + 3 H2O + H(+). It participates in cofactor biosynthesis; pyridoxal 5'-phosphate biosynthesis. Catalyzes the formation of pyridoxal 5'-phosphate from ribose 5-phosphate (RBP), glyceraldehyde 3-phosphate (G3P) and ammonia. The ammonia is provided by the PdxT subunit. Can also use ribulose 5-phosphate and dihydroxyacetone phosphate as substrates, resulting from enzyme-catalyzed isomerization of RBP and G3P, respectively. This is Pyridoxal 5'-phosphate synthase subunit PdxS from Listeria innocua serovar 6a (strain ATCC BAA-680 / CLIP 11262).